We begin with the raw amino-acid sequence, 35 residues long: Photosystem II reaction center protein T (35 aa).

A helical transmembrane segment spans residues Ala-3–Phe-23.

This sequence belongs to the PsbT family. In terms of assembly, PSII is composed of 1 copy each of membrane proteins PsbA, PsbB, PsbC, PsbD, PsbE, PsbF, PsbH, PsbI, PsbJ, PsbK, PsbL, PsbM, PsbT, PsbY, PsbZ, Psb30/Ycf12, at least 3 peripheral proteins of the oxygen-evolving complex and a large number of cofactors. It forms dimeric complexes.

The protein localises to the plastid. The protein resides in the chloroplast thylakoid membrane. In terms of biological role, found at the monomer-monomer interface of the photosystem II (PS II) dimer, plays a role in assembly and dimerization of PSII. PSII is a light-driven water plastoquinone oxidoreductase, using light energy to abstract electrons from H(2)O, generating a proton gradient subsequently used for ATP formation. The sequence is that of Photosystem II reaction center protein T from Oenothera argillicola (Appalachian evening primrose).